A 448-amino-acid chain; its full sequence is Trigger factor (448 aa).

Residues 172-257 (GDRVTVDFVG…MKKIEWPHLP (86 aa)) form the PPIase FKBP-type domain.

This sequence belongs to the FKBP-type PPIase family. Tig subfamily.

It localises to the cytoplasm. The catalysed reaction is [protein]-peptidylproline (omega=180) = [protein]-peptidylproline (omega=0). Involved in protein export. Acts as a chaperone by maintaining the newly synthesized protein in an open conformation. Functions as a peptidyl-prolyl cis-trans isomerase. In Paraburkholderia phymatum (strain DSM 17167 / CIP 108236 / LMG 21445 / STM815) (Burkholderia phymatum), this protein is Trigger factor.